The following is a 149-amino-acid chain: Protein AE7-like 2 (149 aa).

This sequence belongs to the MIP18 family.

In terms of biological role, may play a role in chromosome segregation through establishment of sister chromatid cohesion. Unable to complement ae7 mutants, and thus probably not involved in the cytosolic iron-sulfur assembly (CIA) pathway. The polypeptide is Protein AE7-like 2 (Arabidopsis thaliana (Mouse-ear cress)).